Reading from the N-terminus, the 78-residue chain is UPF0349 protein BPUM_2879 (78 aa).

This sequence belongs to the UPF0349 family.

The polypeptide is UPF0349 protein BPUM_2879 (Bacillus pumilus (strain SAFR-032)).